We begin with the raw amino-acid sequence, 522 residues long: Apolipoprotein N-acyltransferase (522 aa).

Helical transmembrane passes span 17-37, 61-81, 98-118, 127-147, 164-184, and 197-217; these read YFTYLIAIISGLLGVFAFSPF, TALLSTFLWAMGFFCFGVSWL, FLVGLLAAYLALYPMLFTYLV, VIFAVIWTLTEFLRGWIFTGF, IAPIFGVTGLTFFTVWASAVI, and LKLVLANALLLIIVGGLSAYS. Residues 236-483 form the CN hydrolase domain; the sequence is AQGNIEQNLK…ETTLTYKIAP (248 aa). Glu-276 (proton acceptor) is an active-site residue. Lys-342 is a catalytic residue. Cys-394 serves as the catalytic Nucleophile. A helical membrane pass occupies residues 495 to 515; the sequence is NMPLYALSLLFLLLHSMMAFI.

Belongs to the CN hydrolase family. Apolipoprotein N-acyltransferase subfamily.

Its subcellular location is the cell inner membrane. The catalysed reaction is N-terminal S-1,2-diacyl-sn-glyceryl-L-cysteinyl-[lipoprotein] + a glycerophospholipid = N-acyl-S-1,2-diacyl-sn-glyceryl-L-cysteinyl-[lipoprotein] + a 2-acyl-sn-glycero-3-phospholipid + H(+). It functions in the pathway protein modification; lipoprotein biosynthesis (N-acyl transfer). Its function is as follows. Catalyzes the phospholipid dependent N-acylation of the N-terminal cysteine of apolipoprotein, the last step in lipoprotein maturation. The polypeptide is Apolipoprotein N-acyltransferase (Haemophilus influenzae (strain ATCC 51907 / DSM 11121 / KW20 / Rd)).